Here is a 422-residue protein sequence, read N- to C-terminus: Enolase (422 aa).

(2R)-2-phosphoglycerate is bound at residue Q163. Residue E205 is the Proton donor of the active site. Mg(2+) is bound by residues D242, E283, and D310. Positions 335, 364, 365, and 386 each coordinate (2R)-2-phosphoglycerate. Catalysis depends on K335, which acts as the Proton acceptor.

The protein belongs to the enolase family. The cofactor is Mg(2+).

The protein resides in the cytoplasm. It is found in the secreted. It localises to the cell surface. The catalysed reaction is (2R)-2-phosphoglycerate = phosphoenolpyruvate + H2O. It functions in the pathway carbohydrate degradation; glycolysis; pyruvate from D-glyceraldehyde 3-phosphate: step 4/5. Functionally, catalyzes the reversible conversion of 2-phosphoglycerate (2-PG) into phosphoenolpyruvate (PEP). It is essential for the degradation of carbohydrates via glycolysis. This Bdellovibrio bacteriovorus (strain ATCC 15356 / DSM 50701 / NCIMB 9529 / HD100) protein is Enolase.